The sequence spans 173 residues: Photosystem I assembly protein Ycf3 (173 aa).

TPR repeat units lie at residues 35–68 (AYVY…EESP), 72–105 (SETL…NSNQ), and 120–153 (GRTA…YPGG).

The protein belongs to the Ycf3 family.

It is found in the cellular thylakoid membrane. Functionally, essential for the assembly of the photosystem I (PSI) complex. May act as a chaperone-like factor to guide the assembly of the PSI subunits. This chain is Photosystem I assembly protein Ycf3, found in Prochlorococcus marinus (strain MIT 9313).